Here is a 166-residue protein sequence, read N- to C-terminus: Large ribosomal subunit protein uL10 (166 aa).

It belongs to the universal ribosomal protein uL10 family. In terms of assembly, part of the ribosomal stalk of the 50S ribosomal subunit. The N-terminus interacts with L11 and the large rRNA to form the base of the stalk. The C-terminus forms an elongated spine to which L12 dimers bind in a sequential fashion forming a multimeric L10(L12)X complex.

In terms of biological role, forms part of the ribosomal stalk, playing a central role in the interaction of the ribosome with GTP-bound translation factors. In Pseudomonas putida (strain GB-1), this protein is Large ribosomal subunit protein uL10.